The chain runs to 910 residues: Ubiquitin carboxyl-terminal hydrolase 9 (910 aa).

The DUSP domain occupies 19 to 134; that stretch reads TTPEEEKRIV…GGPPIERKLI (116 aa). The segment at 68–89 is disordered; it reads ISGESSEASRPGPIDNHDIIES. One can recognise a USP domain in the interval 303–894; that stretch reads AGLSNLGNTC…AAYVLFYRRV (592 aa). Cysteine 312 functions as the Nucleophile in the catalytic mechanism. Histidine 852 functions as the Proton acceptor in the catalytic mechanism.

The protein belongs to the peptidase C19 family.

The catalysed reaction is Thiol-dependent hydrolysis of ester, thioester, amide, peptide and isopeptide bonds formed by the C-terminal Gly of ubiquitin (a 76-residue protein attached to proteins as an intracellular targeting signal).. Its function is as follows. Recognizes and hydrolyzes the peptide bond at the C-terminal Gly of ubiquitin. Involved in the processing of poly-ubiquitin precursors as well as that of ubiquitinated proteins. The protein is Ubiquitin carboxyl-terminal hydrolase 9 (UBP9) of Arabidopsis thaliana (Mouse-ear cress).